The sequence spans 109 residues: DNA-binding protein MJ0691 (109 aa).

It belongs to the PDCD5 family.

The chain is DNA-binding protein MJ0691 from Methanocaldococcus jannaschii (strain ATCC 43067 / DSM 2661 / JAL-1 / JCM 10045 / NBRC 100440) (Methanococcus jannaschii).